The sequence spans 559 residues: DNA ligase (559 aa).

ATP is bound at residue glutamate 247. Catalysis depends on lysine 249, which acts as the N6-AMP-lysine intermediate. Residues arginine 254, arginine 269, glutamate 299, phenylalanine 339, arginine 414, and lysine 420 each contribute to the ATP site.

It belongs to the ATP-dependent DNA ligase family. It depends on Mg(2+) as a cofactor.

The enzyme catalyses ATP + (deoxyribonucleotide)n-3'-hydroxyl + 5'-phospho-(deoxyribonucleotide)m = (deoxyribonucleotide)n+m + AMP + diphosphate.. DNA ligase that seals nicks in double-stranded DNA during DNA replication, DNA recombination and DNA repair. The sequence is that of DNA ligase from Pyrococcus abyssi.